The sequence spans 33 residues: Cytochrome b6-f complex subunit 8 (33 aa).

Residues 2–22 traverse the membrane as a helical segment; the sequence is LFTIAWASLAAVFSFSIAMVV.

The protein belongs to the PetN family. In terms of assembly, the 4 large subunits of the cytochrome b6-f complex are cytochrome b6, subunit IV (17 kDa polypeptide, PetD), cytochrome f and the Rieske protein, while the 4 small subunits are PetG, PetL, PetM and PetN. The complex functions as a dimer.

It localises to the cellular thylakoid membrane. Functionally, component of the cytochrome b6-f complex, which mediates electron transfer between photosystem II (PSII) and photosystem I (PSI), cyclic electron flow around PSI, and state transitions. This Synechococcus sp. (strain CC9311) protein is Cytochrome b6-f complex subunit 8.